A 198-amino-acid chain; its full sequence is Segregation and condensation protein B (198 aa).

The segment at 168–198 is disordered; sequence KLADPATDEPDQNEMDLFFDRFNQSKEQEEE.

This sequence belongs to the ScpB family. In terms of assembly, homodimer. Homodimerization may be required to stabilize the binding of ScpA to the Smc head domains. Component of a cohesin-like complex composed of ScpA, ScpB and the Smc homodimer, in which ScpA and ScpB bind to the head domain of Smc. The presence of the three proteins is required for the association of the complex with DNA.

It is found in the cytoplasm. In terms of biological role, participates in chromosomal partition during cell division. May act via the formation of a condensin-like complex containing Smc and ScpA that pull DNA away from mid-cell into both cell halves. This chain is Segregation and condensation protein B, found in Listeria monocytogenes serotype 4b (strain CLIP80459).